We begin with the raw amino-acid sequence, 312 residues long: DNA primase small subunit PriS (312 aa).

Residues Asp88, Asp90, and Asp215 contribute to the active site.

It belongs to the eukaryotic-type primase small subunit family. In terms of assembly, heterodimer of a small subunit (PriS) and a large subunit (PriL). Mg(2+) serves as cofactor. It depends on Mn(2+) as a cofactor.

In terms of biological role, catalytic subunit of DNA primase, an RNA polymerase that catalyzes the synthesis of short RNA molecules used as primers for DNA polymerase during DNA replication. The small subunit contains the primase catalytic core and has DNA synthesis activity on its own. Binding to the large subunit stabilizes and modulates the activity, increasing the rate of DNA synthesis while decreasing the length of the DNA fragments, and conferring RNA synthesis capability. The DNA polymerase activity may enable DNA primase to also catalyze primer extension after primer synthesis. May also play a role in DNA repair. This chain is DNA primase small subunit PriS, found in Pyrobaculum arsenaticum (strain DSM 13514 / JCM 11321 / PZ6).